A 964-amino-acid chain; its full sequence is Translation initiation factor IF-2 (964 aa).

The tract at residues Ala35 to Met353 is disordered. Positions Lys64–Thr108 are enriched in low complexity. Positions Pro124–Ala133 are enriched in pro residues. Over residues Ala145–Thr155 the composition is skewed to basic and acidic residues. The segment covering Asn166–Lys178 has biased composition (pro residues). Low complexity predominate over residues Pro220 to Asp233. 2 stretches are compositionally biased toward gly residues: residues Gly234–Pro252 and Gly290–Gly333. The segment covering Arg337–Lys346 has biased composition (basic residues). The tr-type G domain maps to Lys459 to Asp631. Residues Gly468–Thr475 form a G1 region. GTP is bound at residue Gly468–Thr475. The G2 stretch occupies residues Gly493 to Gly497. Positions Asp518–Gly521 are G3. GTP-binding positions include Asp518–His522 and Asn572–Asp575. The interval Asn572–Asp575 is G4. The tract at residues Ser608–Lys610 is G5.

It belongs to the TRAFAC class translation factor GTPase superfamily. Classic translation factor GTPase family. IF-2 subfamily.

It is found in the cytoplasm. Functionally, one of the essential components for the initiation of protein synthesis. Protects formylmethionyl-tRNA from spontaneous hydrolysis and promotes its binding to the 30S ribosomal subunits. Also involved in the hydrolysis of GTP during the formation of the 70S ribosomal complex. In Corynebacterium efficiens (strain DSM 44549 / YS-314 / AJ 12310 / JCM 11189 / NBRC 100395), this protein is Translation initiation factor IF-2.